The sequence spans 569 residues: Laccase-13 (569 aa).

Positions 1-21 are cleaved as a signal peptide; that stretch reads MEQLRPFFLLLAIFVASLVNA. 2 Plastocyanin-like domains span residues 29–145 and 157–308; these read VIQE…PPLS and REIT…YKDA. A glycan (N-linked (GlcNAc...) asparagine) is linked at N75. 4 residues coordinate Cu cation: H79, H81, H124, and H126. N186, N296, N330, N381, N391, and N432 each carry an N-linked (GlcNAc...) asparagine glycan. Residues 418-553 enclose the Plastocyanin-like 3 domain; that stretch reads DFPPTPPVTF…AMVFLVENGE (136 aa). Cu cation-binding residues include H470, H473, H475, H532, C533, H534, and H538.

Belongs to the multicopper oxidase family. Cu cation is required as a cofactor. Mostly expressed in roots. Also detected in leaves, stems and flowers but not in siliques.

It localises to the secreted. It is found in the extracellular space. The protein localises to the apoplast. It catalyses the reaction 4 hydroquinone + O2 = 4 benzosemiquinone + 2 H2O. In terms of biological role, lignin degradation and detoxification of lignin-derived products. The sequence is that of Laccase-13 (LAC13) from Arabidopsis thaliana (Mouse-ear cress).